The sequence spans 301 residues: 4-hydroxybenzoate octaprenyltransferase (301 aa).

Helical transmembrane passes span 34–54, 57–77, 108–128, 152–172, 176–196, 221–241, 245–265, and 279–299; these read IGSLLLLWPTWWALWLAADGL, LWTLLVFTAGVWLTRSAGCVI, LWVFVVLMLVAFALVLTLNWL, LPQVYLGMAFGWGIPMAFAAV, VPLLGWLLYAANILWATAYDT, FDLIAQGILYALMAATLVLVG, DLGVAYWAGLAVAALLVAYEF, and AFLHNNWVGLAIFVGIAVAVA.

Belongs to the UbiA prenyltransferase family. It depends on Mg(2+) as a cofactor.

Its subcellular location is the cell inner membrane. The catalysed reaction is all-trans-octaprenyl diphosphate + 4-hydroxybenzoate = 4-hydroxy-3-(all-trans-octaprenyl)benzoate + diphosphate. The protein operates within cofactor biosynthesis; ubiquinone biosynthesis. Functionally, catalyzes the prenylation of para-hydroxybenzoate (PHB) with an all-trans polyprenyl group. Mediates the second step in the final reaction sequence of ubiquinone-8 (UQ-8) biosynthesis, which is the condensation of the polyisoprenoid side chain with PHB, generating the first membrane-bound Q intermediate 3-octaprenyl-4-hydroxybenzoate. This Xanthomonas euvesicatoria pv. vesicatoria (strain 85-10) (Xanthomonas campestris pv. vesicatoria) protein is 4-hydroxybenzoate octaprenyltransferase.